An 89-amino-acid polypeptide reads, in one-letter code: Large ribosomal subunit protein eL34 (89 aa).

This sequence belongs to the eukaryotic ribosomal protein eL34 family.

The sequence is that of Large ribosomal subunit protein eL34 from Methanococcus vannielii (strain ATCC 35089 / DSM 1224 / JCM 13029 / OCM 148 / SB).